Here is a 274-residue protein sequence, read N- to C-terminus: NH(3)-dependent NAD(+) synthetase (274 aa).

Residue 46 to 53 (GISGGQDS) participates in ATP binding. Aspartate 52 serves as a coordination point for Mg(2+). Deamido-NAD(+) is bound at residue arginine 140. Threonine 160 lines the ATP pocket. Glutamate 165 provides a ligand contact to Mg(2+). 2 residues coordinate deamido-NAD(+): lysine 173 and aspartate 180. Residues lysine 189 and threonine 211 each contribute to the ATP site. 260–261 (HK) provides a ligand contact to deamido-NAD(+).

Belongs to the NAD synthetase family. As to quaternary structure, homodimer.

It carries out the reaction deamido-NAD(+) + NH4(+) + ATP = AMP + diphosphate + NAD(+) + H(+). The protein operates within cofactor biosynthesis; NAD(+) biosynthesis; NAD(+) from deamido-NAD(+) (ammonia route): step 1/1. Its function is as follows. Catalyzes the ATP-dependent amidation of deamido-NAD to form NAD. Uses ammonia as a nitrogen source. In Streptococcus pyogenes serotype M18 (strain MGAS8232), this protein is NH(3)-dependent NAD(+) synthetase.